A 356-amino-acid chain; its full sequence is 3-dehydroquinate synthase (356 aa).

NAD(+)-binding positions include 69-74 (DGEQYK), 103-107 (GVVGD), 127-128 (TT), Lys-140, and Lys-149. Glu-182, His-245, and His-262 together coordinate Zn(2+).

The protein belongs to the sugar phosphate cyclases superfamily. Dehydroquinate synthase family. Requires Co(2+) as cofactor. Zn(2+) is required as a cofactor. The cofactor is NAD(+).

It localises to the cytoplasm. It carries out the reaction 7-phospho-2-dehydro-3-deoxy-D-arabino-heptonate = 3-dehydroquinate + phosphate. It participates in metabolic intermediate biosynthesis; chorismate biosynthesis; chorismate from D-erythrose 4-phosphate and phosphoenolpyruvate: step 2/7. Its function is as follows. Catalyzes the conversion of 3-deoxy-D-arabino-heptulosonate 7-phosphate (DAHP) to dehydroquinate (DHQ). The sequence is that of 3-dehydroquinate synthase from Pseudoalteromonas translucida (strain TAC 125).